We begin with the raw amino-acid sequence, 114 residues long: Apokedarcidin (114 aa).

2 disulfides stabilise this stretch: Cys37/Cys47 and Cys88/Cys95.

It belongs to the neocarzinostatin family.

In terms of biological role, binds non-covalently to an enediyne chromophore which is the cytotoxic and mutagenic component of the antibiotic. The chromophore cleaves duplex DNA site-specifically in a single-stranded manner. The apoprotein cleaves proteins selectively, in particular highly basic histones, with H1 proteins being cleaved the more readily. The sequence is that of Apokedarcidin from Actinomycete sp. (strain L585-6 / ATCC 53650).